Reading from the N-terminus, the 471-residue chain is Heat shock 70 kDa protein 13 (471 aa).

The signal sequence occupies residues 1-22 (MAREMTILGSAVLTLLLAGYLA). The segment at 314 to 352 (EEQDRKEPHSSDTELPKDKLSSADDHRVNSGFGRGLSDK) is disordered. The span at 315–341 (EQDRKEPHSSDTELPKDKLSSADDHRV) shows a compositional bias: basic and acidic residues.

The protein belongs to the heat shock protein 70 family. Binds UBQLN2.

Its subcellular location is the microsome. It localises to the endoplasmic reticulum. Has peptide-independent ATPase activity. The polypeptide is Heat shock 70 kDa protein 13 (HSPA13) (Pongo abelii (Sumatran orangutan)).